The primary structure comprises 336 residues: MACMKKALPFILMVLLQIGYAGMDILTKDVLNKGMSIYVLSVYRHGVATVVMAPFAFYFDNPVIAQNLFNLGMKYTTATFAIALYNTLPAVTFILALIFRLESVKFQSIRSAAKVVGTVTTVGGIMVMTLVKGPALDLFWTKGPSAQNTVGTDIHSSIKGAVLVTIGCFSYACFMILQAITLKTYPAELSLATWICLIGTIEGVVVALVMEKGNPSVWAIGWDTKLLTITYSGIVCSALGYYIGGVVMKTRGPVFVTAFKPLCMIVVAIMSSIIFDEQMYLGRALGATVICVGLYLVIWGKAKDYEYPSTPQIDDDLAQATTSKQKEQRRTVIESV.

The next 9 membrane-spanning stretches (helical) occupy residues 7 to 27 (ALPF…DILT), 45 to 65 (HGVA…PVIA), 79 to 99 (TFAI…ALIF), 115 to 135 (VVGT…KGPA), 160 to 180 (GAVL…LQAI), 189 to 209 (LSLA…VALV), 227 to 247 (LTIT…GGVV), 255 to 275 (FVTA…SIIF), and 279 to 299 (MYLG…LVIW). 2 consecutive EamA domains span residues 63–126 (VIAQ…GGIM) and 169–298 (FSYA…YLVI).

Belongs to the drug/metabolite transporter (DMT) superfamily. Plant drug/metabolite exporter (P-DME) (TC 2.A.7.4) family.

The protein resides in the membrane. The chain is WAT1-related protein At2g37450 from Arabidopsis thaliana (Mouse-ear cress).